We begin with the raw amino-acid sequence, 389 residues long: Methylthioribose kinase (389 aa).

Residues N37, K52, and 106-108 (EDL) each bind ATP. D224 contacts substrate. Position 241 to 243 (241 to 243 (DPE)) interacts with ATP. R331 provides a ligand contact to substrate.

This sequence belongs to the methylthioribose kinase family. As to quaternary structure, homodimer.

The enzyme catalyses 5-(methylsulfanyl)-D-ribose + ATP = 5-(methylsulfanyl)-alpha-D-ribose 1-phosphate + ADP + H(+). The protein operates within amino-acid biosynthesis; L-methionine biosynthesis via salvage pathway; S-methyl-5-thio-alpha-D-ribose 1-phosphate from S-methyl-5'-thioadenosine (hydrolase route): step 2/2. In terms of biological role, catalyzes the phosphorylation of methylthioribose into methylthioribose-1-phosphate. The sequence is that of Methylthioribose kinase from Exiguobacterium sibiricum (strain DSM 17290 / CCUG 55495 / CIP 109462 / JCM 13490 / 255-15).